The following is a 152-amino-acid chain: Xanthine-guanine phosphoribosyltransferase (152 aa).

Residues Arg37 to Gly38, Arg69, and Asp88 to Thr96 each bind 5-phospho-alpha-D-ribose 1-diphosphate. A GMP-binding site is contributed by Arg69. Mg(2+) is bound at residue Asp89. Guanine contacts are provided by Asp92 and Ile135. Positions 92 and 135 each coordinate xanthine. GMP contacts are provided by residues Asp92–Thr96 and Trp134–Ile135.

Belongs to the purine/pyrimidine phosphoribosyltransferase family. XGPT subfamily. Homotetramer. Mg(2+) serves as cofactor.

Its subcellular location is the cell inner membrane. The enzyme catalyses GMP + diphosphate = guanine + 5-phospho-alpha-D-ribose 1-diphosphate. The catalysed reaction is XMP + diphosphate = xanthine + 5-phospho-alpha-D-ribose 1-diphosphate. It catalyses the reaction IMP + diphosphate = hypoxanthine + 5-phospho-alpha-D-ribose 1-diphosphate. The protein operates within purine metabolism; GMP biosynthesis via salvage pathway; GMP from guanine: step 1/1. It functions in the pathway purine metabolism; XMP biosynthesis via salvage pathway; XMP from xanthine: step 1/1. Its function is as follows. Purine salvage pathway enzyme that catalyzes the transfer of the ribosyl-5-phosphate group from 5-phospho-alpha-D-ribose 1-diphosphate (PRPP) to the N9 position of the 6-oxopurines guanine and xanthine to form the corresponding ribonucleotides GMP (guanosine 5'-monophosphate) and XMP (xanthosine 5'-monophosphate), with the release of PPi. To a lesser extent, also acts on hypoxanthine. The chain is Xanthine-guanine phosphoribosyltransferase from Aliivibrio fischeri (strain ATCC 700601 / ES114) (Vibrio fischeri).